The primary structure comprises 117 residues: Protein Wnt-6 (117 aa).

A lipid anchor (O-palmitoleoyl serine; by PORCN) is attached at S1. A disulfide bond links C83 and C98. An N-linked (GlcNAc...) asparagine glycan is attached at N84.

The protein belongs to the Wnt family. Post-translationally, palmitoleoylation is required for efficient binding to frizzled receptors. Depalmitoleoylation leads to Wnt signaling pathway inhibition.

The protein localises to the secreted. It localises to the extracellular space. Its subcellular location is the extracellular matrix. Ligand for members of the frizzled family of seven transmembrane receptors. Probable developmental protein. May be a signaling molecule which affects the development of discrete regions of tissues. Is likely to signal over only few cell diameters. The chain is Protein Wnt-6 (WNT-6) from Plethodon jordani (Red-cheeked salamander).